We begin with the raw amino-acid sequence, 561 residues long: Putative cysteine ligase BshC (561 aa).

Residues 472-517 adopt a coiled-coil conformation; sequence LAQSVEKVMQSTLNQVENLKSKTIKAEKQRHNDLIAQIEKSRDNLL.

This sequence belongs to the BshC family.

The chain is Putative cysteine ligase BshC from Chloroherpeton thalassium (strain ATCC 35110 / GB-78).